The primary structure comprises 420 residues: Pectate lyase (420 aa).

A signal peptide spans 1-21 (MKKVMLATALFLGLTPAGANA). The segment at 117-139 (TWGKKEPSGTQEEARARSQKNQK) is disordered. Positions 119–132 (GKKEPSGTQEEARA) are enriched in basic and acidic residues. The Ca(2+) site is built by aspartate 205, aspartate 244, and aspartate 248. The active site involves arginine 300.

It belongs to the polysaccharide lyase 1 family. In terms of assembly, monomer. Ca(2+) is required as a cofactor.

It is found in the secreted. It carries out the reaction Eliminative cleavage of (1-&gt;4)-alpha-D-galacturonan to give oligosaccharides with 4-deoxy-alpha-D-galact-4-enuronosyl groups at their non-reducing ends.. The protein operates within glycan metabolism; pectin degradation; 2-dehydro-3-deoxy-D-gluconate from pectin: step 2/5. Produces unsaturated products from polygalacturonate. The protein is Pectate lyase (pel) of Bacillus subtilis (strain 168).